The chain runs to 324 residues: Cytochrome c biogenesis protein CcsA (324 aa).

A run of 8 helical transmembrane segments spans residues 15 to 35, 44 to 64, 71 to 91, 98 to 118, 143 to 163, 228 to 248, 255 to 275, and 289 to 309; these read FSIV…DEII, GMIA…IYSG, LYES…VPYF, LSTI…SGLL, MILG…LLVL, VISL…VWAN, WNWD…AVYL, and AIVA…VNLL.

This sequence belongs to the CcmF/CycK/Ccl1/NrfE/CcsA family. May interact with Ccs1.

Its subcellular location is the plastid. The protein localises to the chloroplast thylakoid membrane. In terms of biological role, required during biogenesis of c-type cytochromes (cytochrome c6 and cytochrome f) at the step of heme attachment. In Daucus carota (Wild carrot), this protein is Cytochrome c biogenesis protein CcsA.